We begin with the raw amino-acid sequence, 165 residues long: Large ribosomal subunit protein uL10 (165 aa).

Belongs to the universal ribosomal protein uL10 family. Part of the ribosomal stalk of the 50S ribosomal subunit. The N-terminus interacts with L11 and the large rRNA to form the base of the stalk. The C-terminus forms an elongated spine to which L12 dimers bind in a sequential fashion forming a multimeric L10(L12)X complex.

Functionally, forms part of the ribosomal stalk, playing a central role in the interaction of the ribosome with GTP-bound translation factors. The chain is Large ribosomal subunit protein uL10 (rplJ) from Halalkalibacterium halodurans (strain ATCC BAA-125 / DSM 18197 / FERM 7344 / JCM 9153 / C-125) (Bacillus halodurans).